Reading from the N-terminus, the 923-residue chain is MERGLPLLCATLALALALAGAFRSDKCGGTIKIENPGYLTSPGYPHSYHPSEKCEWLIQAPEPYQRIMINFNPHFDLEDRDCKYDYVEVIDGENEGGRLWGKFCGKIAPSPVVSSGPFLFIKFVSDYETHGAGFSIRYEIFKRGPECSQNYTAPTGVIKSPGFPEKYPNSLECTYIIFAPKMSEIILEFESFDLEQDSNPPGGMFCRYDRLEIWDGFPEVGPHIGRYCGQKTPGRIRSSSGVLSMVFYTDSAIAKEGFSANYSVLQSSISEDFKCMEALGMESGEIHSDQITASSQYGTNWSVERSRLNYPENGWTPGEDSYKEWIQVDLGLLRFVTAVGTQGAISKETKKKYYVKTYRVDISSNGEDWISLKEGNKAIIFQGNTNPTDVVLGVFSKPLITRFVRIKPVSWETGISMRFEVYGCKITDYPCSGMLGMVSGLISDSQITASNQADRNWMPENIRLVTSRTGWALPPSPHPYTNEWLQVDLGDEKIVRGVIIQGGKHRENKVFMRKFKIAYSNNGSDWKTIMDDSKRKAKSFEGNNNYDTPELRTFSPLSTRFIRIYPERATHSGLGLRMELLGCEVEAPTAGPTTPNGNPVDECDDDQANCHSGTGDDFQLTGGTTVLATEKPTIIDSTIQSEFPTYGFNCEFGWGSHKTFCHWEHDSHAQLRWSVLTSKTGPIQDHTGDGNFIYSQADENQKGKVARLVSPVVYSQSSAHCMTFWYHMSGSHVGTLRVKLRYQKPEEYDQLVWMVVGHQGDHWKEGRVLLHKSLKLYQVIFEGEIGKGNLGGIAVDDISINNHISQEDCAKPTDLDKKNTEIKIDETGSTPGYEGEGEGDKNISRKPGNVLKTLDPILITIIAMSALGVLLGAVCGVVLYCACWHNGMSERNLSALENYNFELVDGVKLKKDKLNPQSNYSEA.

Residues 1–21 (MERGLPLLCATLALALALAGA) form the signal peptide. Residues 22–856 (FRSDKCGGTI…PGNVLKTLDP (835 aa)) lie on the Extracellular side of the membrane. 3 disulfides stabilise this stretch: Cys-27–Cys-54, Cys-82–Cys-104, and Cys-147–Cys-173. CUB domains follow at residues 27-141 (CGGT…YEIF) and 147-265 (CSQN…YSVL). Asn-150 is a glycosylation site (N-linked (GlcNAc...) asparagine). Residues Glu-195, Asp-209, and Asp-250 each coordinate Ca(2+). Cys-206 and Cys-228 are oxidised to a cystine. Residues Asn-261, Asn-300, and Asn-522 are each glycosylated (N-linked (GlcNAc...) asparagine). 2 disulfide bridges follow: Cys-275–Cys-424 and Cys-431–Cys-583. F5/8 type C domains follow at residues 275–424 (CMEA…VYGC) and 431–583 (CSGM…LLGC). Ser-612 carries O-linked (Xyl...) (chondroitin sulfate) serine; alternate glycosylation. An O-linked (Xyl...) (heparan sulfate) serine; alternate glycan is attached at Ser-612. The MAM domain occupies 645-811 (TYGFNCEFGW…NHISQEDCAK (167 aa)). The segment at 820-845 (TEIKIDETGSTPGYEGEGEGDKNISR) is disordered. The O-linked (Xyl...) (chondroitin sulfate) serine glycan is linked to Ser-829. Asn-842 carries an N-linked (GlcNAc...) asparagine glycan. Residues 857-879 (ILITIIAMSALGVLLGAVCGVVL) traverse the membrane as a helical segment. The Cytoplasmic portion of the chain corresponds to 880 to 923 (YCACWHNGMSERNLSALENYNFELVDGVKLKKDKLNPQSNYSEA). Residue Ser-894 is modified to Phosphoserine.

Belongs to the neuropilin family. In terms of assembly, homodimer, and heterodimer with NRP2. Binds PLXNB1. Interacts with FER. Interacts with VEGFA. Interacts with ABCB8/MITOSUR in mitochondria. Nervous system.

The protein localises to the mitochondrion membrane. It localises to the cell membrane. It is found in the cytoplasm. Receptor involved in the development of the cardiovascular system, in angiogenesis, in the formation of certain neuronal circuits and in organogenesis outside the nervous system. Mediates the chemorepulsant activity of semaphorins. Recognizes a C-end rule (CendR) motif R/KXXR/K on its ligands which causes cellular internalization and vascular leakage. Binds to semaphorin 3A (SEMA3A), the PLGF-2 isoform of PGF, the VEGF165 isoform of VEGFA and VEGFB. Coexpression with KDR results in increased VEGF165 binding to KDR as well as increased chemotaxis. Regulates VEGF-induced angiogenesis. Binding to VEGFA initiates a signaling pathway needed for motor neuron axon guidance and cell body migration, including for the caudal migration of facial motor neurons from rhombomere 4 to rhombomere 6 during embryonic development. Regulates mitochondrial iron transport via interaction with ABCB8/MITOSUR. The sequence is that of Neuropilin-1 from Mus musculus (Mouse).